The primary structure comprises 80 residues: Protein KorB (80 aa).

2 DNA-binding regions (H-T-H motif) span residues 13 to 32 (AEAALKPLGQQRINVLAELD) and 56 to 75 (NEVTAVAPNTARAWAKAEAE).

In terms of biological role, repressor for the transcription of certain pIJ101 promoters, including those the from kilA and kilB loci. The sequence is that of Protein KorB (korB) from Streptomyces lividans.